The following is an 89-amino-acid chain: Dynein light chain LC6, flagellar outer arm (89 aa).

Belongs to the dynein light chain family. Consists of at least 3 heavy chains (alpha, beta and gamma), 2 intermediate chains and 8 light chains.

The protein resides in the cytoplasm. The protein localises to the cytoskeleton. Its subcellular location is the flagellum axoneme. This Heliocidaris crassispina (Sea urchin) protein is Dynein light chain LC6, flagellar outer arm.